A 391-amino-acid polypeptide reads, in one-letter code: Multidrug resistance protein MdtL (391 aa).

A run of 12 helical transmembrane segments spans residues 4-24 (FLIC…MYLV), 42-62 (IAFS…GKVA), 69-89 (PVAI…SLAE), 93-113 (LFLA…VVAF), 131-151 (LLNG…HLIM), 158-178 (SLFW…LFIL), 203-222 (FFLS…LTFV), 245-265 (ALTA…LGIF), 269-289 (TLMI…AVSP), 293-313 (VSLF…GVAM), 331-351 (LGIA…VVGI), and 356-376 (MLIG…MFVA).

The protein belongs to the major facilitator superfamily. DHA1 family. MdtL (TC 2.A.1.2.22) subfamily.

Its subcellular location is the cell inner membrane. Confers resistance to chloramphenicol. This is Multidrug resistance protein MdtL from Escherichia coli O45:K1 (strain S88 / ExPEC).